Here is a 134-residue protein sequence, read N- to C-terminus: U34-theraphotoxin-Cg1a (134 aa).

The signal sequence occupies residues 1–19; the sequence is MKLAVVFLLTTVVFTLAQS. 3 cysteine pairs are disulfide-bonded: Cys-24–Cys-35, Cys-29–Cys-53, and Cys-63–Cys-84. The disordered stretch occupies residues 97–134; it reads EQSSTSTSSTQGPITSSTVTTQSEATTETETTTAAEGK. The segment covering 99–134 has biased composition (low complexity); sequence SSTSTSSTQGPITSSTVTTQSEATTETETTTAAEGK.

The protein belongs to the neurotoxin 32 family. As to expression, expressed by the venom gland.

It is found in the secreted. The polypeptide is U34-theraphotoxin-Cg1a (Chilobrachys guangxiensis (Chinese earth tiger tarantula)).